The following is a 249-amino-acid chain: LexA repressor (249 aa).

The tract at residues 1–25 is disordered; the sequence is MAAAATGGRATSQPKKTTKGLTPRQ. A DNA-binding region (H-T-H motif) is located at residues 45-65; that stretch reads MREIGDTVGLASLSSVTHQLS. Residues Ser173 and Lys210 each act as for autocatalytic cleavage activity in the active site.

It belongs to the peptidase S24 family. Homodimer.

It catalyses the reaction Hydrolysis of Ala-|-Gly bond in repressor LexA.. Its function is as follows. Represses a number of genes involved in the response to DNA damage (SOS response), including recA and lexA. In the presence of single-stranded DNA, RecA interacts with LexA causing an autocatalytic cleavage which disrupts the DNA-binding part of LexA, leading to derepression of the SOS regulon and eventually DNA repair. This chain is LexA repressor, found in Pseudarthrobacter chlorophenolicus (strain ATCC 700700 / DSM 12829 / CIP 107037 / JCM 12360 / KCTC 9906 / NCIMB 13794 / A6) (Arthrobacter chlorophenolicus).